Reading from the N-terminus, the 205-residue chain is Peptidyl-tRNA hydrolase (205 aa).

A tRNA-binding site is contributed by Tyr17. His22 (proton acceptor) is an active-site residue. The tRNA site is built by Tyr73 and Asn75.

This sequence belongs to the PTH family. In terms of assembly, monomer.

It is found in the cytoplasm. The enzyme catalyses an N-acyl-L-alpha-aminoacyl-tRNA + H2O = an N-acyl-L-amino acid + a tRNA + H(+). Functionally, hydrolyzes ribosome-free peptidyl-tRNAs (with 1 or more amino acids incorporated), which drop off the ribosome during protein synthesis, or as a result of ribosome stalling. In terms of biological role, catalyzes the release of premature peptidyl moieties from peptidyl-tRNA molecules trapped in stalled 50S ribosomal subunits, and thus maintains levels of free tRNAs and 50S ribosomes. The sequence is that of Peptidyl-tRNA hydrolase from Maridesulfovibrio salexigens (strain ATCC 14822 / DSM 2638 / NCIMB 8403 / VKM B-1763) (Desulfovibrio salexigens).